We begin with the raw amino-acid sequence, 141 residues long: Large ribosomal subunit protein uL11c (141 aa).

This sequence belongs to the universal ribosomal protein uL11 family. Part of the ribosomal stalk of the 50S ribosomal subunit. Interacts with L10 and the large rRNA to form the base of the stalk. L10 forms an elongated spine to which L12 dimers bind in a sequential fashion forming a multimeric L10(L12)X complex.

It localises to the plastid. The protein resides in the chloroplast. Functionally, forms part of the ribosomal stalk which helps the ribosome interact with GTP-bound translation factors. This is Large ribosomal subunit protein uL11c from Pyropia yezoensis (Susabi-nori).